A 1196-amino-acid polypeptide reads, in one-letter code: NACHT, LRR and PYD domains-containing protein 1b allele 5 (1196 aa).

Residues 1-22 (MEESPPKQKSNTKVTQHEGQQD) form a disordered region. An NACHT domain is found at 126 to 435 (QLVIIEGAAG…EFFAAISCIL (310 aa)). Position 132–139 (132–139 (GAAGIGKS)) interacts with ATP. 2 LRR repeats span residues 627 to 647 (NLEG…QSLC) and 684 to 704 (SLTE…RMLC). Residues 789 to 922 (FWGPTGPVAT…GYTVLKNPSF (134 aa)) form a ZU5 region. The FIIND domain occupies 789–1072 (FWGPTGPVAT…KFDHLCDQEF (284 aa)). A UPA region spans residues 923-1072 (SPMGVVLRII…KFDHLCDQEF (150 aa)). Residues 1106 to 1189 (HFMDQHREQL…HLVMDLFEKS (84 aa)) enclose the CARD domain.

This sequence belongs to the NLRP family. In terms of assembly, interacts with DPP9; leading to inhibit activation of the inflammasome. DPP9 acts via formation of a ternary complex, composed of a DPP9 homodimer, one full-length Nlrp1b protein, and one cleaved C-terminus of Nlrp1b (NACHT, LRR and PYD domains-containing protein 1b, C-terminus). Interacts with DPP8; leading to inhibit activation of the inflammasome, probably via formation of a ternary complex with DPP8. Interacts (via LRR repeats) with BCL2 and BCL2L1 (via the loop between motifs BH4 and BH3). Interacts with NOD2; this interaction may increase IL1B release. Interacts with EIF2AK2/PKR; this interaction requires EIF2AK2 activity, is accompanied by EIF2AK2 autophosphorylation and promotes inflammasome assembly in response to B.anthracis lethal toxin. Interacts with MEFV; this interaction targets Nlrp1b to degradation by autophagy, hence preventing excessive IL1B- and IL18-mediated inflammation. Interacts with the C-terminal part of Nlrp1b (NACHT, LRR and PYD domains-containing protein 1b, C-terminus) in absence of pathogens and other damage-associated signals. As to quaternary structure, interacts with the N-terminal part of Nlrp1b (NACHT, LRR and PYD domains-containing protein 1b, N-terminus) in absence of pathogens and other damage-associated signals. Homomultimer; forms the Nlrp1b inflammasome polymeric complex, a filament composed of homopolymers of this form in response to pathogens and other damage-associated signals. The Nlrp1b inflammasome polymeric complex directly recruits pro-caspase-1 (proCASP1) independently of PYCARD/ASC. Interacts (via CARD domain) with CASP1 (via CARD domain); leading to CASP1 activation. In terms of processing, autocatalytically cleaved. Autocatalytic cleavage in FIIND region occurs constitutively, prior to activation signals, and is required for inflammasome activity (IL1B release), possibly by facilitating CASP1 binding. Both N- and C-terminal parts remain associated non-covalently. Post-translationally, ubiquitinated by the N-end rule pathway in response to pathogens and other damage-associated signals, leading to its degradation by the proteasome and subsequent release of the cleaved C-terminal part of the protein (NACHT, LRR and PYD domains-containing protein 1b, C-terminus), which polymerizes and forms the Nlrp1b inflammasome. (Microbial infection) Cleavage by B.anthracis lethal toxin (LT) endopeptidase promotes ubiquitination and degradation of the N-terminal part, releasing the cleaved C-terminal part of the protein (NACHT, LRR and PYD domains-containing protein 1b, C-terminus), which polymerizes and forms the Nlrp1b inflammasome. As to expression, expressed in macrophages.

Its subcellular location is the cytoplasm. The protein resides in the cytosol. It localises to the inflammasome. Its activity is regulated as follows. Activated by cleavage by B.anthracis lethal toxin (LT) endopeptidase. Cleavage by LT promotes ubiquitination and degradation of the N-terminal part, releasing the cleaved C-terminal part of the protein (NACHT, LRR and PYD domains-containing protein 1b, C-terminus), which polymerizes and forms the Nlrp1b inflammasome. Nlrp1b inflammasome is inhibited by DPP8 and DPP9, which sequester the C-terminal fragment of Nlrp1b (NACHT, LRR and PYD domains-containing protein 1b, C-terminus) in a ternary complex, thereby preventing Nlrp1b oligomerization and activation. Nlrp1b inflammasome is activated by Val-boroPro (Talabostat, PT-100), an inhibitor of dipeptidyl peptidases DPP8 and DPP9. Val-boroPro relieves inhibition of DPP8 and/or DPP9 by promoting disruption of the ternary complex, releasing its C-terminal part from autoinhibition. Activated by metabolic inhibitors, such as 2-deoxy-D-glucose and sodium azide. Not activated by muramyl dipeptide, nor by full-length bacterial peptidoglycan. Its function is as follows. Acts as the sensor component of the Nlrp1b inflammasome, which mediates inflammasome activation in response to various pathogen-associated signals, leading to subsequent pyroptosis. Inflammasomes are supramolecular complexes that assemble in the cytosol in response to pathogens and other damage-associated signals and play critical roles in innate immunity and inflammation. Acts as a recognition receptor (PRR): recognizes specific pathogens and other damage-associated signals, such as B.anthracis lethal toxin (LT) or Val-boroPro inhibitor, and mediates the formation of the inflammasome polymeric complex. In response to pathogen-associated signals, the N-terminal part of Nlrp1b is degraded by the proteasome, releasing the cleaved C-terminal part of the protein (NACHT, LRR and PYD domains-containing protein 1b, C-terminus), which polymerizes to initiate the formation of the inflammasome complex: the inflammasome directly recruits pro-caspase-1 (proCASP1) independently of PYCARD/ASC and promotes caspase-1 (CASP1) activation, which subsequently cleaves and activates inflammatory cytokines IL1B and IL18 and gasdermin-D (GSDMD), leading to pyroptosis. In the absence of GSDMD expression, the Nlrp1b inflammasome is able to recruit and activate CASP8, leading to activation of gasdermin-E (GSDME). Activation of Nlrp1b inflammasome is also required for HMGB1 secretion; the active cytokines and HMGB1 stimulate inflammatory responses. Primary mediator of macrophage susceptibility to B.anthracis LT: in response to B.anthracis infection, macrophages and dendritic cells release IL1B and undergo pyroptosis. This early inflammatory response to the toxin increases resistance to infection by B.anthracis spores. Constitutes the precursor of the Nlrp1b inflammasome, which mediates autoproteolytic processing within the FIIND domain to generate the N-terminal and C-terminal parts, which are associated non-covalently in absence of pathogens and other damage-associated signals. Functionally, regulatory part that prevents formation of the Nlrp1b inflammasome: in absence of pathogens and other damage-associated signals, interacts with the C-terminal part of Nlrp1b (NACHT, LRR and PYD domains-containing protein 1b, C-terminus), preventing activation of the Nlrp1b inflammasome. In response to pathogen-associated signals, this part is ubiquitinated by the N-end rule pathway and degraded by the proteasome, releasing the cleaved C-terminal part of the protein, which polymerizes and forms the Nlrp1b inflammasome. In terms of biological role, constitutes the active part of the Nlrp1b inflammasome. In absence of pathogens and other damage-associated signals, interacts with the N-terminal part of Nlrp1b (NACHT, LRR and PYD domains-containing protein 1b, N-terminus), preventing activation of the Nlrp1b inflammasome. In response to pathogen-associated signals, the N-terminal part of Nlrp1b is degraded by the proteasome, releasing this form, which polymerizes to form the Nlrp1b inflammasome complex: the Nlrp1b inflammasome complex then directly recruits pro-caspase-1 (proCASP1) and promotes caspase-1 (CASP1) activation, leading to gasdermin-D (GSDMD) cleavage and subsequent pyroptosis. This chain is NACHT, LRR and PYD domains-containing protein 1b allele 5 (Nlrp1b), found in Mus musculus (Mouse).